Reading from the N-terminus, the 433-residue chain is Signal recognition particle 54 kDa protein (433 aa).

Residues 100–107 (GLQGSGKT), 180–184 (DTAGR), and 238–241 (TKFD) each bind GTP.

It belongs to the GTP-binding SRP family. SRP54 subfamily. As to quaternary structure, part of the signal recognition particle protein translocation system, which is composed of SRP and FtsY. Archaeal SRP consists of a 7S RNA molecule of 300 nucleotides and two protein subunits: SRP54 and SRP19.

Its subcellular location is the cytoplasm. It carries out the reaction GTP + H2O = GDP + phosphate + H(+). Functionally, involved in targeting and insertion of nascent membrane proteins into the cytoplasmic membrane. Binds to the hydrophobic signal sequence of the ribosome-nascent chain (RNC) as it emerges from the ribosomes. The SRP-RNC complex is then targeted to the cytoplasmic membrane where it interacts with the SRP receptor FtsY. The sequence is that of Signal recognition particle 54 kDa protein from Archaeoglobus fulgidus (strain ATCC 49558 / DSM 4304 / JCM 9628 / NBRC 100126 / VC-16).